Here is a 337-residue protein sequence, read N- to C-terminus: Putative carbonic anhydrase-like protein 2 (337 aa).

The first 16 residues, 1-16, serve as a signal peptide directing secretion; the sequence is MIPWLLTACIYPCVIG. The region spanning 17 to 274 is the Alpha-carbonic anhydrase domain; sequence PDFWGLLHGD…LNGRLVRTNI (258 aa). Residue tyrosine 140 is part of the active site. N-linked (GlcNAc...) asparagine glycosylation occurs at asparagine 188. 212 to 213 provides a ligand contact to substrate; that stretch reads TF.

Belongs to the alpha-carbonic anhydrase family.

It is found in the secreted. This is Putative carbonic anhydrase-like protein 2 (cah-2) from Caenorhabditis elegans.